A 353-amino-acid polypeptide reads, in one-letter code: Envelope glycoprotein M (353 aa).

Residues 1-27 (MAKAGVMTLSHVDRMNLRTWTMAIACC) lie on the Intravirion side of the membrane. Residues 28–48 (LLSFVNIVVFSVAAHFPGIGF) traverse the membrane as a helical segment. The Virion surface portion of the chain corresponds to 49 to 82 (PCYYPRIIDFDNMNLTMYNAIHHLTPQLFLDPVQ). Residues 83 to 103 (LIVYVIFTELIFFCVLSYYIV) traverse the membrane as a helical segment. The Intravirion segment spans residues 104 to 132 (CWVQIYFRSEHGTQVNQSTRDINFMGDSA). Residues 133–153 (TCFTFVLTMDTFQIFLLSLSF) form a helical membrane-spanning segment. Topologically, residues 154 to 157 (RLPS) are virion surface. The helical transmembrane segment at 158 to 178 (MVAFSKCMYFMCLTAFVVTLV) threads the bilayer. The Intravirion portion of the chain corresponds to 179 to 210 (THYESRERSAFALSKIHPKLQGTIRYRTAVVN). A helical transmembrane segment spans residues 211-231 (LTQLILGFATMVLAMSLALGF). Topologically, residues 232–240 (GNSFFVKTA) are virion surface. The helical transmembrane segment at 241 to 261 (HVVFGAMVAFAIVACVYFSII) threads the bilayer. The Intravirion segment spans residues 262-270 (ESVLSRYMK). A helical transmembrane segment spans residues 271 to 291 (VQFGYHIGTILGVCGAMYPII). Residues 292 to 304 (RYEALNASSYARD) lie on the Virion surface side of the membrane. A helical transmembrane segment spans residues 305–325 (INIGITVLLLLCVAFSVIRTV). The Intravirion segment spans residues 326 to 353 (RFLLRRNKRYRALALDNEEIRALRSDAE).

This sequence belongs to the herpesviridae glycoprotein M family. Interacts (via N-terminus) with gN (via N-terminus). The gM-gN heterodimer forms the gCII complex.

The protein resides in the virion membrane. It is found in the host Golgi apparatus. Its subcellular location is the host trans-Golgi network. The protein localises to the host endosome membrane. It localises to the host nucleus inner membrane. In terms of biological role, envelope glycoprotein important for virion assembly and egress. Plays a role in the correct incorporation of gH-gL into virion membrane. Directs the glycoprotein N (gN) to the host trans-Golgi network. This Mus musculus (Mouse) protein is Envelope glycoprotein M.